Here is a 715-residue protein sequence, read N- to C-terminus: Methionine--tRNA ligase (715 aa).

The short motif at 20–30 is the 'HIGH' region element; that stretch reads PYANGKAHIGH. Zn(2+) is bound by residues Cys151, Cys154, Cys163, and Cys167. The 'KMSKS' region motif lies at 334–338; sequence KFSKT. Lys337 contacts ATP. The tract at residues 559 to 593 is disordered; the sequence is ANAKRNGVKGGEKEPSKSEGMGPSEASKASEKTVD. Positions 613 to 715 constitute a tRNA-binding domain; that stretch reads DFAKLDIRVG…KEIKSGSRIR (103 aa).

Belongs to the class-I aminoacyl-tRNA synthetase family. MetG type 1 subfamily. Homodimer. It depends on Zn(2+) as a cofactor.

It localises to the cytoplasm. The enzyme catalyses tRNA(Met) + L-methionine + ATP = L-methionyl-tRNA(Met) + AMP + diphosphate. Functionally, is required not only for elongation of protein synthesis but also for the initiation of all mRNA translation through initiator tRNA(fMet) aminoacylation. This chain is Methionine--tRNA ligase, found in Methanosarcina mazei (strain ATCC BAA-159 / DSM 3647 / Goe1 / Go1 / JCM 11833 / OCM 88) (Methanosarcina frisia).